The following is a 396-amino-acid chain: Elongation factor Tu (396 aa).

In terms of domain architecture, tr-type G spans 10-206; it reads KPHVNVGTIG…ALDSYIPEPV (197 aa). Residues 19 to 26 are G1; that stretch reads GHIDHGKT. 19–26 contacts GTP; it reads GHIDHGKT. Thr-26 serves as a coordination point for Mg(2+). The tract at residues 60–64 is G2; the sequence is TKTVT. Positions 83 to 86 are G3; that stretch reads DCPG. GTP is bound by residues 83-87 and 138-141; these read DCPGH and NKCD. The G4 stretch occupies residues 138-141; the sequence is NKCD. The G5 stretch occupies residues 176–178; the sequence is ASL.

This sequence belongs to the TRAFAC class translation factor GTPase superfamily. Classic translation factor GTPase family. EF-Tu/EF-1A subfamily. As to quaternary structure, monomer.

Its subcellular location is the cytoplasm. It carries out the reaction GTP + H2O = GDP + phosphate + H(+). GTP hydrolase that promotes the GTP-dependent binding of aminoacyl-tRNA to the A-site of ribosomes during protein biosynthesis. The chain is Elongation factor Tu from Sorangium cellulosum (strain So ce56) (Polyangium cellulosum (strain So ce56)).